We begin with the raw amino-acid sequence, 669 residues long: MQNSHMDEYRNSSNGSTGNSSEVVVEHPTDFSTEIMNVTEMEQSPDDSPNVNASTEETEMASAVDLPVTLTETEANFPPEYEKFWKTVENNPQDFTGWVYLLQYVEQENHLMAARKAFDRFFIHYPYCYGYWKKYADLEKRHDNIKPSDEVYRRGLQAIPLSVDLWIHYINFLKETLDPGDPETNNTIRGTFEHAVLAAGTDFRSDRLWEMYINWENEQGNLREVTAIYDRILGIPTQLYSHHFQRFKEHVQNNLPRDLLTGEQFIQLRRELASVNGHSGDDGPPGDDLPSGIEDITDPAKLITEIENMRHRIIEIHQEMFNYNEHEVSKRWTFEEGIKRPYFHVKPLEKAQLKNWKEYLEFEIENGTHERVVVLFERCVISCALYEEFWIKYAKYMENHSIEGVRHVFSRACTIHLPKKPMVHMLWAAFEEQQGNINEARNILKTFEECVLGLAMVRLRRVSLERRHGNLEEAEHLLQDAIKNAKSNNESSFYAVKLARHLFKIQKNLPKSRKVLLEAIERDKENTKLYLNLLEMEYSGDLKQNEENILNCFDKAVHGSLPIKMRITFSQRKVEFLEDFGSDVNKLLNAYDEHQTLLKEQDSLKRKAENGSEEPEEKKAHTEDTTSSSTQMIDGDLQANQAVYNYSAWYQYNYQNPWNYGQYYPPPPT.

Over residues methionine 1 to arginine 10 the composition is skewed to basic and acidic residues. Residues methionine 1–valine 23 form a disordered region. Positions asparagine 11–valine 23 are enriched in low complexity. Serine 44 carries the post-translational modification Phosphoserine. HAT repeat units lie at residues asparagine 109–arginine 141, aspartate 143–glutamate 175, glutamate 183–glutamate 218, glycine 220–asparagine 253, threonine 333–glutamate 365, glycine 367–asparagine 399, and glycine 404–asparagine 436. Residues lysine 599–aspartate 624 are compositionally biased toward basic and acidic residues. A disordered region spans residues lysine 599 to aspartate 634. A compositionally biased stretch (polar residues) spans threonine 625–aspartate 634.

Belongs to the PRP39 family.

The protein localises to the nucleus. In terms of biological role, involved in pre-mRNA splicing. This is Pre-mRNA-processing factor 39 (PRPF39) from Homo sapiens (Human).